We begin with the raw amino-acid sequence, 177 residues long: Putative peroxiredoxin (177 aa).

Residues 8 to 177 (TAKGNEIPDT…ASIDTILTKV (170 aa)) enclose the Thioredoxin domain. The active-site Cysteine sulfenic acid (-SOH) intermediate is the cysteine 64. The short motif at 175-177 (TKV) is the Microbody targeting signal element.

The protein belongs to the peroxiredoxin family. Prx5 subfamily. As to quaternary structure, homodimer; disulfide-linked, upon oxidation.

It carries out the reaction a hydroperoxide + [thioredoxin]-dithiol = an alcohol + [thioredoxin]-disulfide + H2O. Functionally, thiol-specific peroxidase that catalyzes the reduction of hydrogen peroxide and organic hydroperoxides to water and alcohols, respectively. Plays a role in cell protection against oxidative stress by detoxifying peroxides and as sensor of hydrogen peroxide-mediated signaling events. This Malassezia furfur (Pityriasis versicolor infection agent) protein is Putative peroxiredoxin.